Reading from the N-terminus, the 2715-residue chain is Histone-lysine N-methyltransferase 2B (2715 aa).

Over residues 1–11 (MAAAAGGGSCP) the composition is skewed to gly residues. Disordered regions lie at residues 1-65 (MAAA…GEDT), 81-302 (RRLW…GGLP), 320-518 (SLGL…PKST), and 532-771 (VSAR…QMPP). An N-acetylalanine modification is found at A2. Residues 12–24 (GPGSARGRFPGRP) show a composition bias toward low complexity. The Menin-binding motif (MBM) signature appears at 17–36 (RGRFPGRPRGAGGGGGRGGR). Gly residues-rich tracts occupy residues 25-38 (RGAGGGGGRGGRGN) and 49-60 (RGGGATGPGGAE). Positions 37-44 (GNGAERVR) form a DNA-binding region, a.T hook 1. A compositionally biased stretch (acidic residues) spans 109 to 123 (PEEESSDGESDEEEF). Positions 110-117 (EEESSDGE) form a DNA-binding region, a.T hook 2. 3 positions are modified to phosphoserine: S113, S114, and S118. Basic residues predominate over residues 144 to 158 (QRGRAPRGRGRKHKT). Pro residues predominate over residues 160–176 (PLPPPRLADVAPTPPKT). The segment covering 199–208 (RAQAPQAPRS) has biased composition (low complexity). The residue at position 351 (S351) is a Phosphoserine. A DNA-binding region (a.T hook 3) is located at residues 357-365 (QEQKLDDEE). The segment covering 361-374 (LDDEEEEKKEEEEK) has biased composition (acidic residues). Residues 375-387 (DKEGEEKEERAVA) are compositionally biased toward basic and acidic residues. The span at 401–449 (LPPPPLTPPAPSPPPPLPPPSTSPPPPLCPPPPPPVSPPPLPSPPPPPA) shows a compositional bias: pro residues. The segment covering 545-556 (RFMDEDPPKPPK) has biased composition (basic and acidic residues). Residues 568 to 596 (TTSPPVPQEPAPVPSPPRAPTPPSTPVPL) show a composition bias toward pro residues. Positions 597–608 (PEKRRSILREPT) are enriched in basic and acidic residues. Pro residues predominate over residues 618–637 (LPPPPPAPPPPPAPSPPPAP). Low complexity predominate over residues 731 to 751 (PQTQAQLLQPLQALQTQLLPQ). Pro residues predominate over residues 752–769 (ALPPPQPQLQPPPSPQQM). K805 is covalently cross-linked (Glycyl lysine isopeptide (Lys-Gly) (interchain with G-Cter in SUMO2)). Disordered stretches follow at residues 819–868 (PLSP…GPRI) and 894–959 (SALP…HHGK). S821, S844, and S861 each carry phosphoserine. Residues 836–857 (ISDRGPVRSEDESVEAKRERPS) show a composition bias toward basic and acidic residues. The segment covering 907-917 (EDTSSASETES) has biased composition (low complexity). Phosphoserine is present on S936. Residues 948 to 959 (TPRRSLPSHHGK) show a composition bias toward basic residues. Residues 959–1006 (KKMRMARCGHCRGCLRVQDCGSCVNCLDKPKFGGPNTKKQCCVYRKCD) form a CXXC-type zinc finger. The Zn(2+) site is built by C966, C969, C972, C978, C981, C984, C1000, and C1005. The disordered stretch occupies residues 1027–1132 (LLPWDSDESP…RPRKPTLQPV (106 aa)). Phosphoserine occurs at positions 1032, 1035, 1092, and 1095. K1136 is covalently cross-linked (Glycyl lysine isopeptide (Lys-Gly) (interchain with G-Cter in SUMO2)). Residues 1146–1166 (LAPGPFASFPNGWTGKQKSPD) form a disordered region. 3 PHD-type zinc fingers span residues 1201–1252 (PMVC…CKFC), 1249–1303 (CKFC…CVRC), and 1335–1396 (GNYC…CAGA). Residues 1404-1504 (ALSGALQGGL…GLLLKLLESA (101 aa)) enclose the Bromo domain. Positions 1545–1567 (QQEPETPESGQPPGDPSAAFQGK) are disordered. The segment at 1578–1618 (PRQCALCLKYGDADSKEAGRLLYIGQNEWTHVNCAIWSAEV) adopts a C2HC pre-PHD-type zinc-finger fold. A PHD-type 4 zinc finger spans residues 1639–1686 (MRCELCLKPGATVGCCLSSCLSNFHFMCARASYCIFQDDKKVFCQKHT). The FYR N-terminal domain occupies 1727–1783 (AINVLIGSIRIDSLGTLSDLSDCEGRLFPIGYQCSRLYWSTVDARRRCWYRCRILEY). 4 disordered regions span residues 1806-1978 (HSPA…PDFE), 2008-2093 (VAAG…VVRA), 2118-2162 (LKNL…PTRT), and 2280-2412 (RVST…RTGP). Residues 1876–1894 (PLGGVSFGPLPSPGSPSSL) are compositionally biased toward low complexity. A phosphoserine mark is found at S1930 and S1936. Residues 1960–1972 (PPGPAPSPPPPED) show a composition bias toward pro residues. Acidic residues predominate over residues 2062 to 2072 (DGVDDGTDSEA). A phosphothreonine mark is found at T2068 and T2083. Polar residues predominate over residues 2144 to 2153 (NGSQPSQGLT). Residues S2288 and S2348 each carry the phosphoserine modification. Over residues 2342–2351 (EPAGEESPGP) the composition is skewed to low complexity. Residues 2359–2373 (LPLPEDGPPQVPDGP) show a composition bias toward pro residues. The 82-residue stretch at 2411 to 2492 (GPHLRFEISS…QRCQHYKFRY (82 aa)) folds into the FYR C-terminal domain. The short motif at 2508–2513 (GAARAE) is the WDR5 interaction motif (WIN) element. Residues 2575 to 2691 (EAVGVYRSAI…RGEELTYDYK (117 aa)) form the SET domain. Residues H2585, R2587, Y2629, and 2652-2653 (NH) each bind S-adenosyl-L-methionine. Residues C2655 and C2703 each coordinate Zn(2+). The 17-residue stretch at 2699–2715 (NKLPCNCGAKRCRRFLN) folds into the Post-SET domain. Position 2704 (N2704) interacts with S-adenosyl-L-methionine. Residues C2705 and C2710 each coordinate Zn(2+).

This sequence belongs to the class V-like SAM-binding methyltransferase superfamily. Histone-lysine methyltransferase family. TRX/MLL subfamily. In terms of assembly, component of the menin-associated histone methyltransferase complex, at least composed of KMT2B/MLL4, ASH2L, RBBP5, WDR5, DPY30, MEN1; the complex interacts with POLR2A and POLR2B via MEN1. Interacts with NFE2. Interacts with KDM6B. Interacts (via WIN motif) with WDR5. Interacts (via MBM motif) with MEN1. Forms a core complex with the evolutionary conserved subcomplex WRAD composed of WDR5, RBBP5, ASH2L/ASH2 and DPY30 subunits; WRAD differentially stimulates the methyltransferase activity. Widely expressed. Highest levels in testis. Also found in brain with higher expression in the cerebellum than in any other region, bone marrow, heart, muscle, kidney, placenta, spleen, thymus, prostate, ovary, intestine, colon, peripheral blood lymphocytes and pancreas. Often amplified in pancreatic carcinomas.

It is found in the nucleus. The catalysed reaction is L-lysyl(4)-[histone H3] + S-adenosyl-L-methionine = N(6)-methyl-L-lysyl(4)-[histone H3] + S-adenosyl-L-homocysteine + H(+). It carries out the reaction N(6)-methyl-L-lysyl(4)-[histone H3] + S-adenosyl-L-methionine = N(6),N(6)-dimethyl-L-lysyl(4)-[histone H3] + S-adenosyl-L-homocysteine + H(+). Histone methyltransferase that catalyzes methyl group transfer from S-adenosyl-L-methionine to the epsilon-amino group of 'Lys-4' of histone H3 (H3K4) via a non-processive mechanism. Part of chromatin remodeling machinery predominantly forms H3K4me1 and H3K4me2 methylation marks at active chromatin sites where transcription and DNA repair take place. Likely plays a redundant role with KMT2C in enriching H3K4me1 marks on primed and active enhancer elements. Plays a central role in beta-globin locus transcription regulation by being recruited by NFE2. Plays an important role in controlling bulk H3K4me during oocyte growth and preimplantation development. Required during the transcriptionally active period of oocyte growth for the establishment and/or maintenance of bulk H3K4 trimethylation (H3K4me3), global transcriptional silencing that preceeds resumption of meiosis, oocyte survival and normal zygotic genome activation. This chain is Histone-lysine N-methyltransferase 2B (KMT2B), found in Homo sapiens (Human).